The following is a 483-amino-acid chain: Aspartyl/glutamyl-tRNA(Asn/Gln) amidotransferase subunit B (483 aa).

The protein belongs to the GatB/GatE family. GatB subfamily. Heterotrimer of A, B and C subunits.

It catalyses the reaction L-glutamyl-tRNA(Gln) + L-glutamine + ATP + H2O = L-glutaminyl-tRNA(Gln) + L-glutamate + ADP + phosphate + H(+). The enzyme catalyses L-aspartyl-tRNA(Asn) + L-glutamine + ATP + H2O = L-asparaginyl-tRNA(Asn) + L-glutamate + ADP + phosphate + 2 H(+). In terms of biological role, allows the formation of correctly charged Asn-tRNA(Asn) or Gln-tRNA(Gln) through the transamidation of misacylated Asp-tRNA(Asn) or Glu-tRNA(Gln) in organisms which lack either or both of asparaginyl-tRNA or glutaminyl-tRNA synthetases. The reaction takes place in the presence of glutamine and ATP through an activated phospho-Asp-tRNA(Asn) or phospho-Glu-tRNA(Gln). This Rickettsia bellii (strain RML369-C) protein is Aspartyl/glutamyl-tRNA(Asn/Gln) amidotransferase subunit B.